A 201-amino-acid chain; its full sequence is MESTVAHAFHRFALAILGLALPVALVAYGGNGDSRKAAPLAPKAAALGRSMPETPTGDVLTISSPAFADGAPIPEQYTCKGANIAPPLTWSAPFGGALVVDDPDAPREPYVHWIVIGIAPGAGSTADGETPGGGISLPNSSGQPAYTGPCPPAGTGTHHYRFTLYHLPAVPPLAGLAGTQAARVIAQAATMQARLIGTYEG.

A disordered region spans residues Thr-125–Tyr-146.

The protein belongs to the UPF0098 family.

This chain is UPF0098 protein MT1961, found in Mycobacterium tuberculosis (strain CDC 1551 / Oshkosh).